We begin with the raw amino-acid sequence, 378 residues long: MADIQLSKYHVSKDIGFLLEPLQDVLPDYFAPWNRLAKSLPDLVASHKFRDAVKEMPLLDSSKLAGYRQKRLAHLQLVLITSGYLWQEGEGGAVQRLPECVAKPLWNVSNDLGLKPVLTYGDVCLTNCRVKGGDIEVMYNLPGGAGTEWFLKVCGLVELTLGKGAQSVQNVLDGAKANDKAKMTSGLTELTTTIGNMQAALAKMNDNLTPDHFYNVLRPFLGGFGGPASPISGGLIYEGVSDAPVTMIGGSAAQSSAMQLLDNLLGVTHSPDKQAFLDEISNYMIPAHKQLLADLTKMPRKVPQIVAEAKDANLSKAYSGCVAALTQYRTYHIQVVTKYIVTASKSDSPKSLAYKDTGKSDLIPFLKEVRDDTEKMQK.

Ala2 is modified (blocked amino end (Ala)). Heme is bound at residue His332.

Belongs to the indoleamine 2,3-dioxygenase family. In terms of assembly, homodimer. Heme serves as cofactor.

In terms of biological role, serves a reserve supply of oxygen and facilitates the movement of oxygen within muscles. In Haliotis diversicolor (Abalone), this protein is Myoglobin.